Reading from the N-terminus, the 172-residue chain is Ribosome maturation factor RimM (172 aa).

Residues 95-168 (QEGEFYYHQI…CVDVELMEGL (74 aa)) enclose the PRC barrel domain.

The protein belongs to the RimM family. As to quaternary structure, binds ribosomal protein uS19.

It localises to the cytoplasm. Its function is as follows. An accessory protein needed during the final step in the assembly of 30S ribosomal subunit, possibly for assembly of the head region. Essential for efficient processing of 16S rRNA. May be needed both before and after RbfA during the maturation of 16S rRNA. It has affinity for free ribosomal 30S subunits but not for 70S ribosomes. The chain is Ribosome maturation factor RimM from Streptococcus pyogenes serotype M49 (strain NZ131).